Consider the following 189-residue polypeptide: Elongation factor P (189 aa).

It belongs to the elongation factor P family.

It localises to the cytoplasm. Its pathway is protein biosynthesis; polypeptide chain elongation. Functionally, involved in peptide bond synthesis. Stimulates efficient translation and peptide-bond synthesis on native or reconstituted 70S ribosomes in vitro. Probably functions indirectly by altering the affinity of the ribosome for aminoacyl-tRNA, thus increasing their reactivity as acceptors for peptidyl transferase. The sequence is that of Elongation factor P from Chloroflexus aurantiacus (strain ATCC 29364 / DSM 637 / Y-400-fl).